The sequence spans 474 residues: Equilibrative nucleoside transporter 3 (474 aa).

The Cytoplasmic portion of the chain corresponds to 1-53 (MAIISEDDFRHTSNSTYRTASSSLRADQEALLEKLLDRPPPSLQRPEDRFNGT). 2 positions are modified to phosphoserine: serine 21 and serine 23. The short motif at 31–32 (LL) is the Dileucine internalization motif element. A helical transmembrane segment spans residues 54–74 (YIIFFSLGIGGLLPWNFFVTA). Topologically, residues 75-105 (QEYWIFKLSNCSSPAAGEEPKDSDILNYFES) are extracellular. N-linked (GlcNAc...) asparagine glycosylation is present at asparagine 84. A helical transmembrane segment spans residues 106-126 (YLAVASTVPSVLCLALNFLLV). Over 127 to 134 (NRVPIRVR) the chain is Cytoplasmic. The chain crosses the membrane as a helical span at residues 135-155 (VLASLTVMLAIFIVMTVLVKV). Topologically, residues 156–161 (DTSSWT) are extracellular. Residues 162-182 (HSFFTITITCMAILSGTSTIF) traverse the membrane as a helical segment. Topologically, residues 183 to 201 (NSSVFGMTGSFPMRNSQAL) are cytoplasmic. Residues 202 to 222 (ISGGAMGGTLSAVASLVDLAV) form a helical membrane-spanning segment. Topologically, residues 223-230 (ASDVTDST) are extracellular. Residues 231–251 (LAFFLTADIFLALCIGLYLLL) form a helical membrane-spanning segment. Residues 252–305 (PRLDYARYYMKPVWPTVFSGEEQLPQDSPSPTSVAPGSSDPQTPPLGPILKKTT) are Cytoplasmic-facing. The disordered stretch occupies residues 272-294 (EEQLPQDSPSPTSVAPGSSDPQT). The segment covering 276-292 (PQDSPSPTSVAPGSSDP) has biased composition (polar residues). A helical transmembrane segment spans residues 306–326 (GLGFCIIYLFFITSLIFPAIC). At 327-339 (TNIESLSKGSGSP) the chain is on the extracellular side. The helical transmembrane segment at 340-357 (WSTKFFVPLTTFLLYNFA) threads the bilayer. The Cytoplasmic portion of the chain corresponds to 358-376 (DLCGRQVTAWIQVPGPRSK). Residues 377 to 397 (ALPGLALLRTCFVPLFVFCNY) form a helical membrane-spanning segment. The Extracellular segment spans residues 398–414 (QPRGHLHTVLFQSDVYP). A helical transmembrane segment spans residues 415–435 (VLFTSLLGLSNGYLSTLALIY). Residues 436-453 (GPKIVPRELAEATGVVMT) lie on the Cytoplasmic side of the membrane. Residues 454-474 (FYMGLGLVLGSACSALLVHLI) traverse the membrane as a helical segment.

Belongs to the SLC29A/ENT transporter (TC 2.A.57) family.

The protein localises to the lysosome membrane. It is found in the late endosome membrane. Its subcellular location is the mitochondrion membrane. It localises to the cell membrane. It catalyses the reaction adenosine(in) = adenosine(out). The enzyme catalyses guanosine(in) = guanosine(out). It carries out the reaction inosine(in) = inosine(out). The catalysed reaction is uridine(out) = uridine(in). It catalyses the reaction cytidine(in) = cytidine(out). The enzyme catalyses thymidine(in) = thymidine(out). It carries out the reaction 2'-deoxyadenosine(in) = 2'-deoxyadenosine(out). The catalysed reaction is 2'-deoxycytidine(in) = 2'-deoxycytidine(out). It catalyses the reaction guanine(out) = guanine(in). The enzyme catalyses uracil(in) = uracil(out). It carries out the reaction (R)-noradrenaline(out) = (R)-noradrenaline(in). The catalysed reaction is dopamine(out) = dopamine(in). It catalyses the reaction serotonin(out) = serotonin(in). The enzyme catalyses tyramine(in) = tyramine(out). It carries out the reaction ATP(in) = ATP(out). Functionally, uniporter that mediates the facilitative transport of nucleoside across lysosomal and mitochondrial membranes. Functions as a non-electrogenic Na(+)-independent transporter. Substrate transport is pH-dependent and enhanced under acidic condition, probably reflecting the location of the transporter in acidic intracellular compartments. Proton is not a cotransporting ion but most likely change the ionization state of the transporter which dictates transport-permissible/impermissible conformation for nucleoside translocation. May direct the nucleoside transport from lysosomes to cytosol or cytosol to mitochondria to facilitate the fundamental function of salvage synthesis of nucleic acids. Involved in the transport of nucleosides (adenosine, guanosine, uridine, thymidine, cytidine and inosine) and deoxynucleosides (deoxyadenosine, deoxycytidine). Also mediates transport of purine nucleobases (adenine, guanine) and pyrimidine nucleobases (uracil). Also able to transport monoamine neurotransmitters dopamine, serotonin, noradrenaline and tyramine. Capable of transporting ATP. Mediates nucleoside export from lysosomes in macrophages, which regulates macrophage functions and numbers. The protein is Equilibrative nucleoside transporter 3 (SLC29A3) of Bos taurus (Bovine).